Reading from the N-terminus, the 101-residue chain is NAD(P)H-quinone oxidoreductase subunit 4L, chloroplastic (101 aa).

Helical transmembrane passes span 2–22, 32–52, and 61–81; these read ILEH…YGLI, MCLE…SDFF, and IFCI…LAIV.

Belongs to the complex I subunit 4L family. NDH is composed of at least 16 different subunits, 5 of which are encoded in the nucleus.

Its subcellular location is the plastid. The protein localises to the chloroplast thylakoid membrane. The enzyme catalyses a plastoquinone + NADH + (n+1) H(+)(in) = a plastoquinol + NAD(+) + n H(+)(out). The catalysed reaction is a plastoquinone + NADPH + (n+1) H(+)(in) = a plastoquinol + NADP(+) + n H(+)(out). In terms of biological role, NDH shuttles electrons from NAD(P)H:plastoquinone, via FMN and iron-sulfur (Fe-S) centers, to quinones in the photosynthetic chain and possibly in a chloroplast respiratory chain. The immediate electron acceptor for the enzyme in this species is believed to be plastoquinone. Couples the redox reaction to proton translocation, and thus conserves the redox energy in a proton gradient. The chain is NAD(P)H-quinone oxidoreductase subunit 4L, chloroplastic from Lepidium virginicum (Virginia pepperweed).